The chain runs to 178 residues: Crossover junction endodeoxyribonuclease RuvC (178 aa).

Residues aspartate 11, glutamate 71, and aspartate 143 contribute to the active site. Residues aspartate 11, glutamate 71, and aspartate 143 each contribute to the Mg(2+) site.

The protein belongs to the RuvC family. As to quaternary structure, homodimer which binds Holliday junction (HJ) DNA. The HJ becomes 2-fold symmetrical on binding to RuvC with unstacked arms; it has a different conformation from HJ DNA in complex with RuvA. In the full resolvosome a probable DNA-RuvA(4)-RuvB(12)-RuvC(2) complex forms which resolves the HJ. The cofactor is Mg(2+).

The protein localises to the cytoplasm. It carries out the reaction Endonucleolytic cleavage at a junction such as a reciprocal single-stranded crossover between two homologous DNA duplexes (Holliday junction).. Functionally, the RuvA-RuvB-RuvC complex processes Holliday junction (HJ) DNA during genetic recombination and DNA repair. Endonuclease that resolves HJ intermediates. Cleaves cruciform DNA by making single-stranded nicks across the HJ at symmetrical positions within the homologous arms, yielding a 5'-phosphate and a 3'-hydroxyl group; requires a central core of homology in the junction. The consensus cleavage sequence is 5'-(A/T)TT(C/G)-3'. Cleavage occurs on the 3'-side of the TT dinucleotide at the point of strand exchange. HJ branch migration catalyzed by RuvA-RuvB allows RuvC to scan DNA until it finds its consensus sequence, where it cleaves and resolves the cruciform DNA. The polypeptide is Crossover junction endodeoxyribonuclease RuvC (Neisseria meningitidis serogroup B (strain ATCC BAA-335 / MC58)).